The following is a 288-amino-acid chain: 4-diphosphocytidyl-2-C-methyl-D-erythritol kinase (288 aa).

K11 is a catalytic residue. 100 to 110 (PIAAGLGSGSS) contacts ATP. D140 is a catalytic residue.

This sequence belongs to the GHMP kinase family. IspE subfamily.

The enzyme catalyses 4-CDP-2-C-methyl-D-erythritol + ATP = 4-CDP-2-C-methyl-D-erythritol 2-phosphate + ADP + H(+). Its pathway is isoprenoid biosynthesis; isopentenyl diphosphate biosynthesis via DXP pathway; isopentenyl diphosphate from 1-deoxy-D-xylulose 5-phosphate: step 3/6. Its function is as follows. Catalyzes the phosphorylation of the position 2 hydroxy group of 4-diphosphocytidyl-2C-methyl-D-erythritol. The chain is 4-diphosphocytidyl-2-C-methyl-D-erythritol kinase from Wolbachia sp. subsp. Drosophila simulans (strain wRi).